A 150-amino-acid polypeptide reads, in one-letter code: Phosphoribosyl-AMP cyclohydrolase (150 aa).

Residue D93 participates in Mg(2+) binding. C94 is a Zn(2+) binding site. Positions 95 and 97 each coordinate Mg(2+). Zn(2+)-binding residues include C112 and C119.

This sequence belongs to the PRA-CH family. Homodimer. Mg(2+) is required as a cofactor. The cofactor is Zn(2+).

It is found in the cytoplasm. The catalysed reaction is 1-(5-phospho-beta-D-ribosyl)-5'-AMP + H2O = 1-(5-phospho-beta-D-ribosyl)-5-[(5-phospho-beta-D-ribosylamino)methylideneamino]imidazole-4-carboxamide. It functions in the pathway amino-acid biosynthesis; L-histidine biosynthesis; L-histidine from 5-phospho-alpha-D-ribose 1-diphosphate: step 3/9. Its function is as follows. Catalyzes the hydrolysis of the adenine ring of phosphoribosyl-AMP. The polypeptide is Phosphoribosyl-AMP cyclohydrolase (Rhizobium etli (strain CIAT 652)).